The primary structure comprises 948 residues: Receptor-like protein 45 (948 aa).

The N-terminal stretch at 1 to 26 (MSSSKLMDFGLTWIIMMMILLQGCRS) is a signal peptide. At 27-897 (CIESERQGLL…EDDDESGLLD (871 aa)) the chain is on the extracellular side. 2 N-linked (GlcNAc...) asparagine glycosylation sites follow: Asn99 and Asn113. 2 LRR repeats span residues 106–129 (FEEL…RKGG) and 135–162 (LRNL…AVSL). The LRR 3; degenerate repeat unit spans residues 163 to 183 (KTLILHDNLFKGGFPVQELIN). The N-linked (GlcNAc...) asparagine glycan is linked to Asn183. 25 LRR repeats span residues 184-208 (LTSL…ELTN), 210-233 (RNLR…GICR), 234-257 (LEQL…CFSR), 258-284 (FSKL…DFKS), 286-306 (EYLS…LITE), 307-332 (LTEL…VSGG), 334-357 (QSQL…LWYQ), 358-381 (QELR…LLEN), 382-404 (NTEL…PRTM), 405-429 (RRLQ…GLIL), 430-453 (ASLR…MARM), 454-477 (ENIE…LFTG), 479-502 (YSLS…SSDE), 503-526 (TSLI…LLNL), 527-549 (RMLS…WLGN), 550-573 (FFLE…LFNI), 575-595 (YLWL…LRSS), 596-618 (SDYG…DTLW), 619-640 (YGLR…LFRS), 642-665 (PSIS…LCGL), 666-689 (SNVR…VTNL), 758-782 (LNQM…LGDL), 783-805 (KRVR…SFSN), 807-831 (RSIE…TLLQ), and 833-855 (LVVF…QFNT). Asn328 is a glycosylation site (N-linked (GlcNAc...) asparagine). Residues Asn381 and Asn392 are each glycosylated (N-linked (GlcNAc...) asparagine). Asn436 and Asn465 each carry an N-linked (GlcNAc...) asparagine glycan. The N-linked (GlcNAc...) asparagine glycan is linked to Asn608. N-linked (GlcNAc...) asparagine glycans are attached at residues Asn653, Asn679, and Asn688. An N-linked (GlcNAc...) asparagine glycan is attached at Asn789. N-linked (GlcNAc...) asparagine glycans are attached at residues Asn837 and Asn842. Residues 898–918 (IVVLWWSLGTTYVTVMMGFLV) form a helical membrane-spanning segment. The Cytoplasmic segment spans residues 919–948 (FLCFDSPWRRAWFCLVDTFIDRVKDVLGVI).

It belongs to the RLP family.

It localises to the cell membrane. The sequence is that of Receptor-like protein 45 from Arabidopsis thaliana (Mouse-ear cress).